The chain runs to 247 residues: Carboxy-S-adenosyl-L-methionine synthase (247 aa).

S-adenosyl-L-methionine is bound by residues tyrosine 40, 65–67, 90–91, 122–123, asparagine 137, and arginine 204; these read GSS, DN, and DI.

The protein belongs to the class I-like SAM-binding methyltransferase superfamily. Cx-SAM synthase family. In terms of assembly, homodimer.

The catalysed reaction is prephenate + S-adenosyl-L-methionine = carboxy-S-adenosyl-L-methionine + 3-phenylpyruvate + H2O. Its function is as follows. Catalyzes the conversion of S-adenosyl-L-methionine (SAM) to carboxy-S-adenosyl-L-methionine (Cx-SAM). In Pseudomonas savastanoi pv. phaseolicola (strain 1448A / Race 6) (Pseudomonas syringae pv. phaseolicola (strain 1448A / Race 6)), this protein is Carboxy-S-adenosyl-L-methionine synthase.